The following is a 210-amino-acid chain: Probable GTP-binding protein EngB (210 aa).

The EngB-type G domain maps to 25–199; the sequence is TGIEVAFAGR…RQKLDSWFNE (175 aa). GTP is bound by residues 33 to 40, 60 to 64, 78 to 81, 145 to 148, and 178 to 180; these read GRSNAGKS, GRTQL, DLPG, TKAD, and FSS. Residues Ser-40 and Thr-62 each contribute to the Mg(2+) site.

It belongs to the TRAFAC class TrmE-Era-EngA-EngB-Septin-like GTPase superfamily. EngB GTPase family. Mg(2+) serves as cofactor.

Necessary for normal cell division and for the maintenance of normal septation. The protein is Probable GTP-binding protein EngB of Klebsiella pneumoniae (strain 342).